A 311-amino-acid polypeptide reads, in one-letter code: Olfactory receptor 10J4 (311 aa).

The Extracellular portion of the chain corresponds to 1–29 (MPRPNFMAVTEFTFEGFSIFEWHHRLILF). The chain crosses the membrane as a helical span at residues 30 to 50 (VIFLVLYVLTLASNAIILIVI). Topologically, residues 51-57 (RLNHQLH) are cytoplasmic. The helical transmembrane segment at 58–78 (TPMYFFLSVLSISETYYTVAI) threads the bilayer. At 79–98 (NPQMLSGLLSPQQTISIPGC) the chain is on the extracellular side. Residues Cys-98 and Cys-180 are joined by a disulfide bond. Residues 99-119 (AAQLFFYLTFGVNKCFLLTAM) form a helical membrane-spanning segment. Topologically, residues 120 to 149 (GYDHYVAICNPLQYSVIMGKKACIQLVSGS) are cytoplasmic. A helical membrane pass occupies residues 150–170 (WNIGLSTAIIQVSSVFSLPFC). The Extracellular portion of the chain corresponds to 171-202 (DANLISHFFCDIRPIMKLACADTTIKEFITLL). Residues 203–223 (ISLCVLVLPMVLIFISYVLIV) traverse the membrane as a helical segment. At 224–237 (TTILKIASAEGRRK) the chain is on the cytoplasmic side. A helical transmembrane segment spans residues 238-254 (AFATCASHLTVVIVHYG). At 255–272 (RTSFIYLKPKSQNSLQDR) the chain is on the extracellular side. The helical transmembrane segment at 273–292 (LISVTYTVITPLLNPVVYSL) threads the bilayer. Topologically, residues 293 to 311 (RNKEVKDALLRALGRKPLS) are cytoplasmic.

Belongs to the G-protein coupled receptor 1 family.

Its subcellular location is the cell membrane. Odorant receptor. The sequence is that of Olfactory receptor 10J4 (OR10J4) from Homo sapiens (Human).